A 202-amino-acid chain; its full sequence is Pyridoxal 5'-phosphate synthase subunit PdxT (202 aa).

48–50 (GES) provides a ligand contact to L-glutamine. Cys-80 functions as the Nucleophile in the catalytic mechanism. L-glutamine contacts are provided by residues Arg-112 and 139–140 (IR). Catalysis depends on charge relay system residues His-180 and Glu-182.

This sequence belongs to the glutaminase PdxT/SNO family. In the presence of PdxS, forms a dodecamer of heterodimers. Only shows activity in the heterodimer.

It carries out the reaction aldehydo-D-ribose 5-phosphate + D-glyceraldehyde 3-phosphate + L-glutamine = pyridoxal 5'-phosphate + L-glutamate + phosphate + 3 H2O + H(+). The enzyme catalyses L-glutamine + H2O = L-glutamate + NH4(+). The protein operates within cofactor biosynthesis; pyridoxal 5'-phosphate biosynthesis. In terms of biological role, catalyzes the hydrolysis of glutamine to glutamate and ammonia as part of the biosynthesis of pyridoxal 5'-phosphate. The resulting ammonia molecule is channeled to the active site of PdxS. This chain is Pyridoxal 5'-phosphate synthase subunit PdxT, found in Hyperthermus butylicus (strain DSM 5456 / JCM 9403 / PLM1-5).